The primary structure comprises 259 residues: tRNA (guanine-N(1)-)-methyltransferase (259 aa).

S-adenosyl-L-methionine-binding positions include Gly-117 and 137-142 (LGDFVL).

This sequence belongs to the RNA methyltransferase TrmD family. As to quaternary structure, homodimer.

The protein resides in the cytoplasm. It catalyses the reaction guanosine(37) in tRNA + S-adenosyl-L-methionine = N(1)-methylguanosine(37) in tRNA + S-adenosyl-L-homocysteine + H(+). In terms of biological role, specifically methylates guanosine-37 in various tRNAs. In Polaromonas sp. (strain JS666 / ATCC BAA-500), this protein is tRNA (guanine-N(1)-)-methyltransferase.